A 669-amino-acid chain; its full sequence is Protein ENTREP3 (669 aa).

The next 3 membrane-spanning stretches (helical) occupy residues 34–54 (LLTLGLAQVLLGILVITFSMV), 67–87 (SCPSWAGFSLAFSGLVGIVSW), and 91–111 (FTLVISFFSLLSVLCVMLSMA). N-linked (GlcNAc...) asparagine glycosylation is present at Asn-160. The chain crosses the membrane as a helical span at residues 174 to 194 (LFSVCGLTICAAIICTLSAIV). Phosphoserine is present on residues Ser-359 and Ser-390. 3 disordered regions span residues 387–420 (FEDSPLPRRPPRAARSYSCSAPEAPPPLGAPTAA), 445–502 (PRGG…TTSS), and 550–571 (RSAEKRRPVPTFQKVPLPSGPT). Residues 399–408 (AARSYSCSAP) are compositionally biased toward low complexity. Ser-494 bears the Phosphoserine mark. Ser-575 is subject to Phosphoserine. Residues 597–624 (RRSPDPTGTGAHGYKQVRRSPWGRPGRE) form a disordered region.

This sequence belongs to the ENTREP family. As to quaternary structure, may interact with WWOX.

The protein resides in the membrane. In Mus musculus (Mouse), this protein is Protein ENTREP3.